The primary structure comprises 254 residues: Pyruvate dehydrogenase complex repressor (254 aa).

Residues proline 9–serine 77 enclose the HTH gntR-type domain. The segment at residues glutamate 37–glutamine 56 is a DNA-binding region (H-T-H motif).

Functionally, transcriptional repressor for the pyruvate dehydrogenase complex genes aceEF and lpd. In Salmonella typhi, this protein is Pyruvate dehydrogenase complex repressor (pdhR).